The following is a 283-amino-acid chain: MTNITTWIDEYHKGSRFGLNGKILIKKTSKYQEIILIENEYYGKALMLDGCWMTSLKDEKYYHECLVHPALSSIEEKSNILIIGGGDGGTVRECVKYSQISKIDLVEIDEEVIKISKKFLKEIGGEAWNDKRLEIHVDDGVKWVKKTRDNFYDVIFIDSSDPSEFSNLLFSDSFYKECKRILTPSGILATQSESPESFKNIHINILKTLKNIFKSSETMYSFVPIYPSGIWSWTFASSKNLNLSKQNYDEVKKIEKGCEIWNLNFQNAAFKMMPNKIVKELDS.

Residues 5–238 (TTWIDEYHKG…GIWSWTFASS (234 aa)) form the PABS domain. Q32 contacts S-methyl-5'-thioadenosine. Residues H63 and D87 each contribute to the spermidine site. Residues E107 and 139 to 140 (DG) each bind S-methyl-5'-thioadenosine. Catalysis depends on D158, which acts as the Proton acceptor. Residue 158–161 (DSSD) participates in spermidine binding.

This sequence belongs to the spermidine/spermine synthase family. Homodimer or homotetramer.

Its subcellular location is the cytoplasm. The enzyme catalyses S-adenosyl 3-(methylsulfanyl)propylamine + putrescine = S-methyl-5'-thioadenosine + spermidine + H(+). The protein operates within amine and polyamine biosynthesis; spermidine biosynthesis; spermidine from putrescine: step 1/1. Its function is as follows. Catalyzes the irreversible transfer of a propylamine group from the amino donor S-adenosylmethioninamine (decarboxy-AdoMet) to putrescine (1,4-diaminobutane) to yield spermidine. This chain is Polyamine aminopropyltransferase, found in Prochlorococcus marinus (strain MIT 9215).